Reading from the N-terminus, the 238-residue chain is Aspartate/glutamate leucyltransferase (238 aa).

Belongs to the R-transferase family. Bpt subfamily.

The protein localises to the cytoplasm. It catalyses the reaction N-terminal L-glutamyl-[protein] + L-leucyl-tRNA(Leu) = N-terminal L-leucyl-L-glutamyl-[protein] + tRNA(Leu) + H(+). The catalysed reaction is N-terminal L-aspartyl-[protein] + L-leucyl-tRNA(Leu) = N-terminal L-leucyl-L-aspartyl-[protein] + tRNA(Leu) + H(+). In terms of biological role, functions in the N-end rule pathway of protein degradation where it conjugates Leu from its aminoacyl-tRNA to the N-termini of proteins containing an N-terminal aspartate or glutamate. This is Aspartate/glutamate leucyltransferase from Aeromonas salmonicida (strain A449).